The chain runs to 309 residues: DDRGK domain-containing protein 1 (309 aa).

At 1–2 (MD) the chain is on the lumenal side. A helical transmembrane segment spans residues 3 to 23 (LIILVGIAVALLVVIVTLYLL). Residues 24–309 (QKKNAAPETK…ISAGGGEASS (286 aa)) are Cytoplasmic-facing. Disordered regions lie at residues 32 to 53 (TKVAAAPQRGVPQRAQEGVPRR) and 79 to 175 (ALPA…KEER). Positions 87–96 (DHEDEGQVDG) are enriched in acidic residues. Over residues 107-175 (LDEKMGAKKR…DAERLAKEER (69 aa)) the composition is skewed to basic and acidic residues. Positions 120–177 (EAKEQKRLQREQELHDREQRKVKEAKEEAERKQQEDLEAEAERKRVDAERLAKEERER) form a coiled coil.

The protein belongs to the DDRGK1 family. As to quaternary structure, interacts with Atg9; the interaction is transient.

It is found in the endoplasmic reticulum membrane. Functionally, substrate adapter for ufmylation, the covalent attachment of the ubiquitin-like modifier UFM1 to substrate proteins. Required for ufmylation of Atg9; protects the nervous system during aging, possibly by stabilizing Atg9 and supporting its function. This Drosophila melanogaster (Fruit fly) protein is DDRGK domain-containing protein 1.